A 303-amino-acid polypeptide reads, in one-letter code: Probable cell division protein WhiA (303 aa).

The H-T-H motif DNA-binding region spans 272 to 303 (SIQQLADSLSTPLTKSGVNHRLRKINKIADEL).

Belongs to the WhiA family.

Involved in cell division and chromosome segregation. This Streptococcus pneumoniae (strain ATCC 700669 / Spain 23F-1) protein is Probable cell division protein WhiA.